The following is a 185-amino-acid chain: Large ribosomal subunit protein uL5 (185 aa).

Belongs to the universal ribosomal protein uL5 family. In terms of assembly, part of the 50S ribosomal subunit; part of the 5S rRNA/L5/L18/L25 subcomplex. Contacts the 5S rRNA and the P site tRNA. Forms a bridge to the 30S subunit in the 70S ribosome.

Functionally, this is one of the proteins that bind and probably mediate the attachment of the 5S RNA into the large ribosomal subunit, where it forms part of the central protuberance. In the 70S ribosome it contacts protein S13 of the 30S subunit (bridge B1b), connecting the 2 subunits; this bridge is implicated in subunit movement. Contacts the P site tRNA; the 5S rRNA and some of its associated proteins might help stabilize positioning of ribosome-bound tRNAs. The chain is Large ribosomal subunit protein uL5 from Rhodopseudomonas palustris (strain BisB5).